A 355-amino-acid chain; its full sequence is Glucokinase (355 aa).

Position 11–16 (11–16 (GDIGGT)) interacts with ATP.

The protein belongs to the bacterial glucokinase family.

The protein localises to the cytoplasm. The catalysed reaction is D-glucose + ATP = D-glucose 6-phosphate + ADP + H(+). In Synechocystis sp. (strain ATCC 27184 / PCC 6803 / Kazusa), this protein is Glucokinase.